A 136-amino-acid polypeptide reads, in one-letter code: Snaclec rhodocytin subunit alpha (136 aa).

3 disulfides stabilise this stretch: C5–C16, C33–C131, and C106–C123. The 121-residue stretch at 12–132 (YDQHCYQAFN…CEQMHAFVCK (121 aa)) folds into the C-type lectin domain.

Belongs to the snaclec family. In terms of assembly, dimer (non-covalently linked) of heterodimers of subunits alpha and beta (disulfide-linked). In terms of tissue distribution, expressed by the venom gland.

The protein localises to the secreted. In terms of biological role, elicits platelet aggregation by the binding to the C-type lectin domain family 1 member B (CLEC1B/CLEC2). Binding leads to tyrosine phosphorylation in the cytoplasmic tail of CLEC1B, which promotes the binding of spleen tyrosine kinase (Syk), subsequent activation of PLC-gamma-2, and platelet activation and aggregation. Binding to GPIbalpha (GP1BA) and alpha-2/beta-1 (ITGA2/ITGB1) may also induce aggregation, but this is controversial. In Calloselasma rhodostoma (Malayan pit viper), this protein is Snaclec rhodocytin subunit alpha.